Reading from the N-terminus, the 264-residue chain is Elongation factor Ts (264 aa).

The tract at residues 76–79 (TDFV) is involved in Mg(2+) ion dislocation from EF-Tu.

The protein belongs to the EF-Ts family.

It localises to the cytoplasm. Associates with the EF-Tu.GDP complex and induces the exchange of GDP to GTP. It remains bound to the aminoacyl-tRNA.EF-Tu.GTP complex up to the GTP hydrolysis stage on the ribosome. The sequence is that of Elongation factor Ts from Deinococcus radiodurans (strain ATCC 13939 / DSM 20539 / JCM 16871 / CCUG 27074 / LMG 4051 / NBRC 15346 / NCIMB 9279 / VKM B-1422 / R1).